The sequence spans 135 residues: Transcriptional activator protein (135 aa).

Positions 17–32 (KIQHHIAKKRQVRRRR) match the Nuclear localization signal motif. A zinc finger spans residues 37–54 (CGCSYYIHLDCINHGFTH). The segment at 120-135 (HLDDLTVSDWSFFKSL) is transactivation.

This sequence belongs to the geminiviridae transcriptional activator protein family. As to quaternary structure, monomer. Homodimer. Homooligomer. Self-interaction correlates with nuclear localization and efficient activation of transcription. Monomers suppress local silencing by interacting with and inactivating host adenosine kinase 2 (ADK2) in the cytoplasm. Interacts with and inhibits host SNF1 kinase. Binds to ssDNA. In terms of processing, phosphorylated.

Its subcellular location is the host nucleus. It is found in the host cytoplasm. In terms of biological role, strong activator of the late viral genes promoters. Acts as a suppressor of RNA-mediated gene silencing, also known as post-transcriptional gene silencing (PTGS), a mechanism of plant viral defense that limits the accumulation of viral RNAs. TrAP suppresses the host RNA silencing by inhibiting adenosine kinase 2 (ADK2), a kinase involved in a general methylation pathway. Also suppresses the host basal defense by interacting with and inhibiting SNF1 kinase, a key regulator of cell metabolism implicated in innate antiviral defense. Determines pathogenicity. This is Transcriptional activator protein from Tomato yellow leaf curl Sardinia virus (isolate Spain-2) (TYLCSV).